Consider the following 814-residue polypeptide: Phenylalanine--tRNA ligase beta subunit (814 aa).

Residues 39–153 form the tRNA-binding domain; the sequence is SARAKGVVVG…ELPALGAPVA (115 aa). In terms of domain architecture, B5 spans 414 to 498; it reads ADASSVLLRR…RLVGFDRFGA (85 aa). Mg(2+) is bound by residues aspartate 476, aspartate 482, glutamate 485, and glutamate 486. The FDX-ACB domain occupies 720–813; sequence PTVPASERDL…LVKQHGAELR (94 aa).

This sequence belongs to the phenylalanyl-tRNA synthetase beta subunit family. Type 1 subfamily. As to quaternary structure, tetramer of two alpha and two beta subunits. It depends on Mg(2+) as a cofactor.

It is found in the cytoplasm. The catalysed reaction is tRNA(Phe) + L-phenylalanine + ATP = L-phenylalanyl-tRNA(Phe) + AMP + diphosphate + H(+). This chain is Phenylalanine--tRNA ligase beta subunit, found in Parasynechococcus marenigrum (strain WH8102).